The following is a 454-amino-acid chain: Sensor histidine kinase RppB (454 aa).

At Met-1 to Gln-13 the chain is on the periplasmic side. A helical transmembrane segment spans residues Leu-14 to Tyr-34. Residues Arg-35–Arg-186 lie on the Cytoplasmic side of the membrane. The helical transmembrane segment at Ile-187–Trp-207 threads the bilayer. Residues Gly-208–Ser-454 are Periplasmic-facing. The region spanning Asn-230 to Ser-448 is the Histidine kinase domain. Position 233 is a phosphohistidine; by autocatalysis (His-233).

It is found in the cell inner membrane. It catalyses the reaction ATP + protein L-histidine = ADP + protein N-phospho-L-histidine.. Member of two-component regulatory system RppA/RppB, involved in the establishment of the appropriate stoichiometry between the 2 photosystems. It senses changes in the plastoquinone (PQ) redox poise. Another group shows this two-component pair, renamed NrsR/NrsS, controls the nickel-dependent expression of the nrsBACD operon; they suggest the photosystem-related activities seen earlier are due to the expression of NrsS (RppB) in the absence of its natural substrate NrsR (RppA). The sequence is that of Sensor histidine kinase RppB from Synechocystis sp. (strain ATCC 27184 / PCC 6803 / Kazusa).